The following is a 364-amino-acid chain: MHLRRVKTMPRHSQSLTMAPYSSVSLVEQLEDRILCHEKTTAALVEHAFRIKDDIVSSLQKMQNKGGGDRLARLFLEEHIRNITAIVKQLNRDIEVLQEQIRARDNISYGTNSALKTLEMRQLSGLGDLRGRVARCDASIARLSAEHKSTYEGLQHLNKEQQAAKLILETKIKDAEGQISQLLSRVDLSISEQSTKLKMSHRDSNHQLQLLDTKFKGTVEELSNQILSARSWLQQEQERIEKELLQKIDHLSLIVKENSGANERDVEKKLSQMSARLDKIEESQKRNAEGQRKPDEEKVHGRISKLELQMTEDMKEMKAEVNAGFSAIYESIGSLRQVLEAKMKLDRDQLQKQIQQMQKPETAM.

Coiled coils occupy residues 75–107, 158–189, and 261–287; these read FLEE…RDNI, NKEQ…VDLS, and ANER…QKRN. A disordered region spans residues 281-300; sequence EESQKRNAEGQRKPDEEKVH.

Belongs to the FAM81 family. Interacts with DLG4/PSD-95, GRIN2B/GLUN2B and SYNGAP1; the interactions facilitate condensate formation. Expressed in most regions of the brain (at protein level).

It localises to the postsynaptic density. The protein resides in the cytoplasm. Functionally, facilitates the interaction and assembly of proteins within the postsynaptic density by promoting the condensation of postsynaptic proteins via liquid-liquid phase separation. Required for neuronal activity. Accumulation at the postsynaptic density results in enlargement of dendritic spines. This is Protein FAM81A (Fam81a) from Mus musculus (Mouse).